The primary structure comprises 299 residues: Xyloglucan endotransglucosylase protein 6 (299 aa).

The first 25 residues, 1–25 (MASSLTLPMAMAFTLLALSFASAMG), serve as a signal peptide directing secretion. A GH16 domain is found at 26–219 (GSMNSSRFDE…WSHAPFVASY (194 aa)). The active-site Nucleophile is the E105. E109 (proton donor) is an active-site residue. E109 contributes to the xyloglucan binding site. An N-linked (GlcNAc...) asparagine glycan is attached at N113. Xyloglucan-binding positions include 122–124 (QTN), 132–134 (NRE), 198–199 (DW), and G203. Cystine bridges form between C227–C242 and C281–C294. Position 286 (R286) interacts with xyloglucan.

This sequence belongs to the glycosyl hydrolase 16 family. XTH group 1 subfamily. Contains at least one intrachain disulfide bond essential for its enzymatic activity. As to expression, highest expression in ripe leaves after full expansion. Also expressed in fruits, and at a lower level in flowers and stems (picked at anthesis).

It localises to the secreted. It is found in the cell wall. Its subcellular location is the extracellular space. The protein localises to the apoplast. The catalysed reaction is breaks a beta-(1-&gt;4) bond in the backbone of a xyloglucan and transfers the xyloglucanyl segment on to O-4 of the non-reducing terminal glucose residue of an acceptor, which can be a xyloglucan or an oligosaccharide of xyloglucan.. Functionally, catalyzes xyloglucan endotransglycosylation (XET). Cleaves and religates xyloglucan polymers. Does not catalyze xyloglucan endohydrolysis (XEH). Probably involved in cell wall restructuring during postharvest fruit softening. The protein is Xyloglucan endotransglucosylase protein 6 of Diospyros kaki (Kaki persimmon).